The primary structure comprises 233 residues: Protein TIPIN homolog (233 aa).

A compositionally biased stretch (acidic residues) spans 1–14 (MDEMEDFFENDELD). 2 disordered regions span residues 1-39 (MDEMEDFFENDELDREPSPMGDEAIEDNSGEGGTRRVVE) and 134-233 (GETG…NNDW). Composition is skewed to basic and acidic residues over residues 163 to 190 (DLFKDLPEKEVTTEKAKNSEKSDQKTAE) and 197 to 216 (EEYRMMEEERLREEQEAKEA). The span at 217–227 (ADEDALMEDFG) shows a compositional bias: acidic residues.

The protein belongs to the CSM3 family.

The protein localises to the cytoplasm. The protein resides in the nucleus. Functionally, required for normal progression of S-phase. Important for cell survival after DNA damage or replication stress. This chain is Protein TIPIN homolog, found in Caenorhabditis elegans.